The following is a 125-amino-acid chain: S-adenosylmethionine decarboxylase proenzyme (125 aa).

Serine 63 serves as the catalytic Schiff-base intermediate with substrate; via pyruvic acid. Serine 63 carries the post-translational modification Pyruvic acid (Ser); by autocatalysis. The Proton acceptor; for processing activity role is filled by histidine 68. The active-site Proton donor; for catalytic activity is cysteine 83.

Belongs to the prokaryotic AdoMetDC family. Type 1 subfamily. In terms of assembly, heterotetramer of two alpha and two beta chains arranged as a dimer of alpha/beta heterodimers. Pyruvate is required as a cofactor. In terms of processing, is synthesized initially as an inactive proenzyme. Formation of the active enzyme involves a self-maturation process in which the active site pyruvoyl group is generated from an internal serine residue via an autocatalytic post-translational modification. Two non-identical subunits are generated from the proenzyme in this reaction, and the pyruvate is formed at the N-terminus of the alpha chain, which is derived from the carboxyl end of the proenzyme. The post-translation cleavage follows an unusual pathway, termed non-hydrolytic serinolysis, in which the side chain hydroxyl group of the serine supplies its oxygen atom to form the C-terminus of the beta chain, while the remainder of the serine residue undergoes an oxidative deamination to produce ammonia and the pyruvoyl group blocking the N-terminus of the alpha chain.

It carries out the reaction S-adenosyl-L-methionine + H(+) = S-adenosyl 3-(methylsulfanyl)propylamine + CO2. The protein operates within amine and polyamine biosynthesis; S-adenosylmethioninamine biosynthesis; S-adenosylmethioninamine from S-adenosyl-L-methionine: step 1/1. In terms of biological role, catalyzes the decarboxylation of S-adenosylmethionine to S-adenosylmethioninamine (dcAdoMet), the propylamine donor required for the synthesis of the polyamines spermine and spermidine from the diamine putrescine. This Moorella thermoacetica (strain ATCC 39073 / JCM 9320) protein is S-adenosylmethionine decarboxylase proenzyme.